The primary structure comprises 469 residues: Glutamate--tRNA ligase 2 (469 aa).

Positions 11–21 (PSPTGHLHLGG) match the 'HIGH' region motif. The 'KMSKS' region motif lies at 238-242 (KLSKR). ATP is bound at residue Lys241.

This sequence belongs to the class-I aminoacyl-tRNA synthetase family. Glutamate--tRNA ligase type 1 subfamily. Monomer.

Its subcellular location is the cytoplasm. It carries out the reaction tRNA(Glu) + L-glutamate + ATP = L-glutamyl-tRNA(Glu) + AMP + diphosphate. Catalyzes the attachment of glutamate to tRNA(Glu) in a two-step reaction: glutamate is first activated by ATP to form Glu-AMP and then transferred to the acceptor end of tRNA(Glu). This is Glutamate--tRNA ligase 2 from Ehrlichia chaffeensis (strain ATCC CRL-10679 / Arkansas).